The following is a 185-amino-acid chain: Transcription termination/antitermination protein NusG (185 aa).

Residues 134–164 (VGKRVRIVDGAFSGFEAPITEINGDKLTLTV) enclose the KOW domain.

This sequence belongs to the NusG family.

Its function is as follows. Participates in transcription elongation, termination and antitermination. The protein is Transcription termination/antitermination protein NusG of Lactococcus lactis subsp. lactis (strain IL1403) (Streptococcus lactis).